A 245-amino-acid chain; its full sequence is 8-amino-3,8-dideoxy-manno-octulosonate cytidylyltransferase (245 aa).

Belongs to the KdsB family.

It localises to the cytoplasm. It carries out the reaction 8-amino-3,8-dideoxy-alpha-D-manno-octulosonate + CTP = CMP-8-amino-3,8-dideoxy-alpha-D-manno-oct-2-ulosonate + diphosphate. The protein operates within bacterial outer membrane biogenesis; lipopolysaccharide biosynthesis. In terms of biological role, activates KDO8N (a required 8-carbon sugar) for incorporation into bacterial lipopolysaccharide in the Shewanella genus. This chain is 8-amino-3,8-dideoxy-manno-octulosonate cytidylyltransferase, found in Shewanella amazonensis (strain ATCC BAA-1098 / SB2B).